The following is a 636-amino-acid chain: Biosynthetic arginine decarboxylase (636 aa).

N6-(pyridoxal phosphate)lysine is present on Lys-110. A substrate-binding site is contributed by 290-300; the sequence is IDVGGGLGVDY.

The protein belongs to the Orn/Lys/Arg decarboxylase class-II family. SpeA subfamily. Mg(2+) is required as a cofactor. Pyridoxal 5'-phosphate serves as cofactor.

It catalyses the reaction L-arginine + H(+) = agmatine + CO2. Its function is as follows. Catalyzes the biosynthesis of agmatine from arginine. The sequence is that of Biosynthetic arginine decarboxylase from Pseudomonas aeruginosa (strain ATCC 15692 / DSM 22644 / CIP 104116 / JCM 14847 / LMG 12228 / 1C / PRS 101 / PAO1).